Consider the following 267-residue polypeptide: Glutamate racemase (267 aa).

Residues Asp-9 to Ser-10 and Tyr-41 to Gly-42 contribute to the substrate site. The Proton donor/acceptor role is filled by Cys-72. Residue Asn-73–Thr-74 coordinates substrate. Residue Cys-184 is the Proton donor/acceptor of the active site. Substrate is bound at residue Thr-185–His-186.

The protein belongs to the aspartate/glutamate racemases family.

The enzyme catalyses L-glutamate = D-glutamate. Its pathway is cell wall biogenesis; peptidoglycan biosynthesis. Functionally, provides the (R)-glutamate required for cell wall biosynthesis. The protein is Glutamate racemase of Staphylococcus epidermidis (strain ATCC 12228 / FDA PCI 1200).